A 292-amino-acid polypeptide reads, in one-letter code: Hypoxia responsive morphology factor A (292 aa).

Positions 48–70 (RRNGRRRNLEYVAQHRRKIARKI) match the Bipartite nuclear localization signal motif. The tract at residues 156–186 (GKEHYSLHLSTLPAIRNAFGDVIFDAIERSP) is RNA recognition motif (RRM)-like domain.

The protein belongs to the hrmA family.

It is found in the nucleus. In terms of biological role, hypoxia responsive morphology factor that modulates the expression of the subtelomeric hrmA-associated cluster (HAC) containing genes that alter the hyphal surface (such as reduced total chitin or increased beta-glucan exposure) and perturb inter-hyphal interactions within the developing biofilms, resulting in a loss of vertically aligned polarized growing filaments. Consequently, this hypoxia-typic morphotype (called H-MORPH) with altered biofilm architecture leads to increased hypoxia fitness, increased host inflammation, rapid disease progression, and mortality in a murine model of invasive aspergillosis. This chain is Hypoxia responsive morphology factor A, found in Aspergillus fumigatus (strain CBS 144.89 / FGSC A1163 / CEA10) (Neosartorya fumigata).